Consider the following 360-residue polypeptide: MTPTLRRKLEALAERREELERLLAEPDVVADNTRFRDLSREFAQLEPIATALADETRAKADLAAAEGMRADPDLRELADEEIAAAQARLQELEQELALLLVPRDPRDDGNLFLEVRAGTGGDEAAIFAGDLFRMYARYAERQGWKVEIESDNPGEHGGYKEVVARVVGRGAFSRLKFESGTHRVQRVPATESQGRIHTSAATVAIIPEADEVDDIVINPADLRVDTFRSSGAGGQHVNKTESAIRITHVPTGVVVECQTERSQHANRDKAMKRLKAQLLDAERQRQDAAQAESRRLQVGSGDRSQRIRTYNFPQGRITDHRVEGLTLYDLPNILAGDLDPLLQRLSHEHQVDALAQLSAG.

N5-methylglutamine is present on glutamine 235. The disordered stretch occupies residues 281–310 (AERQRQDAAQAESRRLQVGSGDRSQRIRTY).

This sequence belongs to the prokaryotic/mitochondrial release factor family. Post-translationally, methylated by PrmC. Methylation increases the termination efficiency of RF1.

Its subcellular location is the cytoplasm. Its function is as follows. Peptide chain release factor 1 directs the termination of translation in response to the peptide chain termination codons UAG and UAA. The polypeptide is Peptide chain release factor 1 (Stenotrophomonas maltophilia (strain R551-3)).